The following is a 119-amino-acid chain: FAD-linked sulfhydryl oxidase (119 aa).

Residues 1–97 form the ERV/ALR sulfhydryl oxidase domain; it reads MLHWGPKFWR…ISWSEYKNIY (97 aa). An intrachain disulfide couples cysteine 44 to cysteine 47.

It belongs to the asfivirus B119L family. Interacts with A151R. FAD is required as a cofactor.

It is found in the host cytoplasm. It localises to the virion. The catalysed reaction is 2 R'C(R)SH + O2 = R'C(R)S-S(R)CR' + H2O2. Functionally, FAD-dependent sulfhydryl oxidase that catalyzes the formation of disulfide bonds in viral proteins produced in the cell cytoplasm. The polypeptide is FAD-linked sulfhydryl oxidase (Ornithodoros (relapsing fever ticks)).